Reading from the N-terminus, the 193-residue chain is Putative manganese efflux pump MntP (193 aa).

6 helical membrane-spanning segments follow: residues 3–23, 41–61, 65–85, 106–126, 133–153, and 169–189; these read MYAT…ASIC, LIFG…GLYA, IIEW…CRMI, IVLI…GIGL, IVHT…LGML, and IGGL…LELF.

Belongs to the MntP (TC 9.B.29) family.

Its subcellular location is the cell inner membrane. Its function is as follows. Probably functions as a manganese efflux pump. This chain is Putative manganese efflux pump MntP, found in Photorhabdus laumondii subsp. laumondii (strain DSM 15139 / CIP 105565 / TT01) (Photorhabdus luminescens subsp. laumondii).